Here is a 255-residue protein sequence, read N- to C-terminus: Hydroxyacylglutathione hydrolase (255 aa).

Residues His55, His57, Asp59, His60, His113, Asp132, and His170 each contribute to the Zn(2+) site.

Belongs to the metallo-beta-lactamase superfamily. Glyoxalase II family. In terms of assembly, monomer. The cofactor is Zn(2+).

The enzyme catalyses an S-(2-hydroxyacyl)glutathione + H2O = a 2-hydroxy carboxylate + glutathione + H(+). Its pathway is secondary metabolite metabolism; methylglyoxal degradation; (R)-lactate from methylglyoxal: step 2/2. Functionally, thiolesterase that catalyzes the hydrolysis of S-D-lactoyl-glutathione to form glutathione and D-lactic acid. This chain is Hydroxyacylglutathione hydrolase, found in Methylobacterium nodulans (strain LMG 21967 / CNCM I-2342 / ORS 2060).